Consider the following 201-residue polypeptide: Superoxide dismutase [Mn] (201 aa).

Mn(2+) contacts are provided by His-27, His-81, Asp-163, and His-167.

The protein belongs to the iron/manganese superoxide dismutase family. As to quaternary structure, homodimer. Mn(2+) is required as a cofactor.

Its subcellular location is the secreted. It carries out the reaction 2 superoxide + 2 H(+) = H2O2 + O2. Destroys superoxide anion radicals which are normally produced within the cells and which are toxic to biological systems. This chain is Superoxide dismutase [Mn] (sodA), found in Streptococcus pyogenes serotype M3 (strain ATCC BAA-595 / MGAS315).